The following is a 119-amino-acid chain: MDIEEIKRQKMMELQQQQAQGAPNPEEIQQQQEQERAAYEAQKKQIMKKILSEEARHRLSNIKMVKPEFAEQVEMQLIQLAQSGRLPIPVSDEYFKTLLDQLYTMGSAKKKRDIKFVRK.

Over residues 1–11 (MDIEEIKRQKM) the composition is skewed to basic and acidic residues. Residues 1–36 (MDIEEIKRQKMMELQQQQAQGAPNPEEIQQQQEQER) are disordered. The span at 15-32 (QQQQAQGAPNPEEIQQQQ) shows a compositional bias: low complexity.

Belongs to the PDCD5 family.

This is DNA-binding protein Maeo_0998 from Methanococcus aeolicus (strain ATCC BAA-1280 / DSM 17508 / OCM 812 / Nankai-3).